The chain runs to 209 residues: Thymidine kinase (209 aa).

Residues 25-32 and 103-106 contribute to the ATP site; these read GCMFAGKT and DEVQ. E104 acts as the Proton acceptor in catalysis. Residues C160, C163, C198, and C201 each coordinate Zn(2+).

This sequence belongs to the thymidine kinase family. As to quaternary structure, homotetramer.

Its subcellular location is the cytoplasm. The enzyme catalyses thymidine + ATP = dTMP + ADP + H(+). This Mycoplasma mycoides subsp. mycoides SC (strain CCUG 32753 / NCTC 10114 / PG1) protein is Thymidine kinase.